Reading from the N-terminus, the 227-residue chain is 7-cyano-7-deazaguanine synthase (227 aa).

Residue 8 to 18 (FSGGQDSTTCL) coordinates ATP. C187, C196, C199, and C202 together coordinate Zn(2+).

The protein belongs to the QueC family. Zn(2+) is required as a cofactor.

It catalyses the reaction 7-carboxy-7-deazaguanine + NH4(+) + ATP = 7-cyano-7-deazaguanine + ADP + phosphate + H2O + H(+). Its pathway is purine metabolism; 7-cyano-7-deazaguanine biosynthesis. Functionally, catalyzes the ATP-dependent conversion of 7-carboxy-7-deazaguanine (CDG) to 7-cyano-7-deazaguanine (preQ(0)). This is 7-cyano-7-deazaguanine synthase from Shewanella pealeana (strain ATCC 700345 / ANG-SQ1).